A 248-amino-acid chain; its full sequence is MTKLIVIKIGGQAISQLSTTFFDQIAQWYQQHYQILIVHGGGPMINRLTTQLALPVHKVNGLRVTDAATLVLTKLALLGDAQPALLAKLTQHHLPVLGLNAADNQLLTGELIDYRQLGYVGRLTAVNQVQLMQLLAHHIGILAPLALTETGQWLNVNADMAATVLAQQLHAEKLVLLTDVPGIIHHGNVMTSLSPQQAQQLIRTAVITAGMQPKVQAAIAAIQTGVKQAIITNAIDQPGTAIIQEVAV.

Residues 41-42, Arg63, and Asn155 each bind substrate; that span reads GG.

Belongs to the acetylglutamate kinase family. ArgB subfamily.

It is found in the cytoplasm. It carries out the reaction N-acetyl-L-glutamate + ATP = N-acetyl-L-glutamyl 5-phosphate + ADP. It functions in the pathway amino-acid biosynthesis; L-arginine biosynthesis; N(2)-acetyl-L-ornithine from L-glutamate: step 2/4. Its function is as follows. Catalyzes the ATP-dependent phosphorylation of N-acetyl-L-glutamate. The chain is Acetylglutamate kinase from Lactiplantibacillus plantarum (strain ATCC BAA-793 / NCIMB 8826 / WCFS1) (Lactobacillus plantarum).